We begin with the raw amino-acid sequence, 510 residues long: MQRRPILVVNFGSQYVQLIARRVRELGVYSEIVHWDTPVEEIKKKNPYGIIFSGGPASVYAEGAPLPDKRIYELGVPILGICYGLQVITHQLGGKVVRSEKQEYGRARLRIIKEDVIFEGIPKESDVWMSHADKVVELPEGFEVLAVSENSPYAVIANREKKIYGFQFHPEVTHTVFGKEMLANFIYGVCKAEKNWEMGDFIHEKIEEIRKTVGDAKVIAALSGGVDSTVAAVLTHRAIGDKLHCFFIDHGLLRYKEREEVEKNLRSLGLPLTVVDASEEFLEKLKGVEDPEEKRKIIGRTFIEVFEREAKKIEGAEFLLQGTLYPDVVESAGIKGSAKIKTHHNVGGLPERMNLKLLEPFRELFKDEVRKIGKLLGVPEEILRRHPFPGPGLAIRIIGEVNKKDLEILRKADYIFIQELKKEGLYDRVWQAFAVLLPVKSVGVMGDVRTYEKVVALRAVESVDGMTADWARLPYDFLDRVMRRIINEVEGVNRVVYDISSKPPSTIEWE.

The region spanning 5-195 (PILVVNFGSQ…IYGVCKAEKN (191 aa)) is the Glutamine amidotransferase type-1 domain. C82 acts as the Nucleophile in catalysis. Catalysis depends on residues H169 and E171. The GMPS ATP-PPase domain occupies 196–385 (WEMGDFIHEK…LGVPEEILRR (190 aa)). Residue 223–229 (SGGVDST) participates in ATP binding.

Homodimer.

It carries out the reaction XMP + L-glutamine + ATP + H2O = GMP + L-glutamate + AMP + diphosphate + 2 H(+). It functions in the pathway purine metabolism; GMP biosynthesis; GMP from XMP (L-Gln route): step 1/1. Functionally, catalyzes the synthesis of GMP from XMP. The chain is GMP synthase [glutamine-hydrolyzing] (guaA) from Aquifex aeolicus (strain VF5).